Reading from the N-terminus, the 530-residue chain is Developmental and secondary metabolism regulator VEL1 (530 aa).

The Velvet domain occupies 26–220 (NRSLWYQMTV…ADQGCQVRIR (195 aa)). Residues 40-45 (ERARAC) carry the Nuclear localization signal motif. The tract at residues 206 to 516 (LSKTVADQGC…HDQGWYSRAD (311 aa)) is disordered. Residues 244–253 (FERREEDFGR) show a composition bias toward basic and acidic residues. The segment covering 295–305 (YPPPPPPPSYE) has biased composition (pro residues). Residues 347–356 (YAPTAQSPYS) are compositionally biased toward polar residues. Positions 380–389 (VKHDLYDRRQ) are enriched in basic and acidic residues. The span at 390–404 (STSSYVPPSPSVYST) shows a compositional bias: low complexity. Residues 415 to 426 (SYPPTPVAAPRP) show a composition bias toward pro residues. Positions 429–460 (MHSQTSLPALKIDQLVSPVSPLPPIEPQTGPA) are PEST. Positions 478 to 490 (FAQSTRPLHNGQR) are enriched in polar residues.

The protein belongs to the velvet family. VeA subfamily. In terms of assembly, component of the heterotrimeric velvet complex composed of LAE1, VEL1 and VEL2; VEL1 acting as a bridging protein between LAE1 and VEL2. Interacts with LAE1.

It localises to the nucleus. It is found in the cytoplasm. Functionally, component of the velvet transcription factor complex that controls sexual/asexual developmental ratio in response to light, promoting sexual development in the darkness while stimulating asexual sporulation under illumination. The velvet complex hat acts as a global regulator for secondary metabolite gene expression. Controls positively the expression of the gibberellins, fumonisins and fusarin C gene clusters. Controls the expression of the fusaric acid gene cluster. Controls negatively the expression of the bikaverin gene cluster. Regulates the expression of laeA. Plays a crucial role in virulence. The chain is Developmental and secondary metabolism regulator VEL1 from Gibberella fujikuroi (strain CBS 195.34 / IMI 58289 / NRRL A-6831) (Bakanae and foot rot disease fungus).